Reading from the N-terminus, the 335-residue chain is Hsp90 co-chaperone Cdc37-like 1 (335 aa).

Residues 1–11 show a composition bias toward pro residues; sequence MEQPWPPPGPW. Positions 1-42 are disordered; that stretch reads MEQPWPPPGPWSFPRTGGETEEESDLDVSPSSSHYSPVPDGG. Positions 2-170 are self-association; the sequence is EQPWPPPGPW…YEQKIRHFGM (169 aa). Low complexity predominate over residues 27–40; it reads DVSPSSSHYSPVPD. Phosphoserine is present on residues Ser32 and Ser88. Residues 84–120 are a coiled coil; it reads HNSESLDQEHAKAQTAVSELRQREEEWRQKEEALVQR. Positions 147 to 276 are self-association and interaction with Hsp90; sequence KTEEEDKSQS…SRVRLYAQSQ (130 aa). The tract at residues 266–335 is interaction with Hsp70; it reads KSRVRLYAQS…EDDDRMMDTV (70 aa). The interval 277–335 is required for interaction with STIP1; sequence SLQPVTVQNHVPHSGVGCIGSLESLPQNPDSLQCCTPAPLCSVDSVVHKEDDDRMMDTV.

This sequence belongs to the CDC37 family. In terms of assembly, self-associates. Forms complexes with Hsp70 and Hsp90. Interacts with CDC37, FKBP4, PPID and STIP1.

The protein localises to the cytoplasm. In terms of biological role, co-chaperone that binds to numerous proteins and promotes their interaction with Hsp70 and Hsp90. The protein is Hsp90 co-chaperone Cdc37-like 1 (Cdc37l1) of Mus musculus (Mouse).